The primary structure comprises 488 residues: Transmembrane protein 39A (488 aa).

2 N-linked (GlcNAc...) asparagine glycosylation sites follow: Asn31 and Asn39. Helical transmembrane passes span 72 to 92 (GLLF…IQYI), 110 to 130 (TSLN…VMLA), and 155 to 175 (LITA…WTLV). The N-linked (GlcNAc...) asparagine glycan is linked to Asn180. Helical transmembrane passes span 182–202 (SVLN…LCCF), 287–307 (EVLF…LCFV), 319–339 (CEHL…QLLP), 420–440 (LLNL…YSLL), and 446–466 (NHTL…FKLL).

The protein belongs to the TMEM39 family.

It is found in the endoplasmic reticulum membrane. Its function is as follows. Regulates autophagy by controlling the spatial distribution and levels of the intracellular phosphatidylinositol 4-phosphate (PtdIns(4)P) pools. Modulates (PtdIns(4)P) levels by regulating the ER-to-Golgi trafficking of the phosphatidylinositide phosphatase SACM1L. This is Transmembrane protein 39A (tmem39a) from Xenopus tropicalis (Western clawed frog).